The chain runs to 438 residues: Xylose isomerase (438 aa).

Active-site residues include histidine 100 and aspartate 103. The Mg(2+) site is built by glutamate 231, glutamate 267, histidine 270, aspartate 295, aspartate 306, aspartate 308, and aspartate 338.

This sequence belongs to the xylose isomerase family. In terms of assembly, homotetramer. Requires Mg(2+) as cofactor.

Its subcellular location is the cytoplasm. The catalysed reaction is alpha-D-xylose = alpha-D-xylulofuranose. The protein is Xylose isomerase of Pseudomonas syringae pv. tomato (strain ATCC BAA-871 / DC3000).